The sequence spans 271 residues: Interleukin-1 alpha (271 aa).

Residues 1–112 (MAKVPDMFED…DSEEEIIKPR (112 aa)) constitute a propeptide that is removed on maturation. At Lys82 the chain carries N6-acetyllysine. Residues Lys82 and Lys83 are each lipidated (N6-myristoyl lysine). The tract at residues 82–86 (KKRRL) is nuclear localization signal (NLS). Ser87 is modified (phosphoserine). N-linked (GlcNAc...) asparagine glycans are attached at residues Asn102 and Asn141.

The protein belongs to the IL-1 family. Monomer. Interacts with TMED10; the interaction mediates the translocation from the cytoplasm into the ERGIC (endoplasmic reticulum-Golgi intermediate compartment) and thereby secretion. Interacts with IL1R1. Interacts with S100A13; this interaction is the first step in the export of IL1A, followed by direct translocation of this complex across the plasma membrane. In terms of processing, acetylated within its nuclear localization sequence, which impacts subcellular localization. Post-translationally, proteolytic processed by CAPN1 in a calcium-dependent manner. Cleavage from 31 kDa precursor to 18 kDa biologically active molecules. Phosphorylated. Phosphorylation greatly enhances susceptibility to digestion and promotes the conversion of pre-IL1A alpha to the biologically active IL1A.

Its subcellular location is the nucleus. The protein localises to the cytoplasm. It is found in the secreted. Functionally, cytokine constitutively present intracellularly in nearly all resting non-hematopoietic cells that plays an important role in inflammation and bridges the innate and adaptive immune systems. After binding to its receptor IL1R1 together with its accessory protein IL1RAP, forms the high affinity interleukin-1 receptor complex. Signaling involves the recruitment of adapter molecules such as MYD88, IRAK1 or IRAK4. In turn, mediates the activation of NF-kappa-B and the three MAPK pathways p38, p42/p44 and JNK pathways. Within the cell, acts as an alarmin and cell death results in its liberation in the extracellular space after disruption of the cell membrane to induce inflammation and alert the host to injury or damage. In addition to its role as a danger signal, which occurs when the cytokine is passively released by cell necrosis, directly senses DNA damage and acts as a signal for genotoxic stress without loss of cell integrity. In Homo sapiens (Human), this protein is Interleukin-1 alpha (IL1A).